A 213-amino-acid polypeptide reads, in one-letter code: MRDSMSEADRSSPGSGKTDREDETAENATQDVIAVTPDDERTGLANRLDAHTGDGVRHRAFTCLLFDEDGRVLLAQRADRKRLWDTHWDGTVASHPIEGQSQVDATRQRLAEELGIEPHQYDKLEITDRFEYKRRYLDEGLEWEVCAVLQATLHDTSFDRDPEEVGGAMWVDYEDLYENPRYYRQLRLCPWFEIAMRRDFEGDADPVPDGTRA.

Over residues 1–10 (MRDSMSEADR) the composition is skewed to basic and acidic residues. Residues 1 to 34 (MRDSMSEADRSSPGSGKTDREDETAENATQDVIA) are disordered. His51, His58, and His95 together coordinate Mn(2+). One can recognise a Nudix hydrolase domain in the interval 56–193 (VRHRAFTCLL…RQLRLCPWFE (138 aa)). A Mg(2+)-binding site is contributed by Glu113. Glu142 and Glu144 together coordinate Mn(2+). The active site involves Glu144.

This sequence belongs to the IPP isomerase type 1 family. The cofactor is Mg(2+). Mn(2+) is required as a cofactor.

It localises to the cytoplasm. It catalyses the reaction isopentenyl diphosphate = dimethylallyl diphosphate. Its pathway is isoprenoid biosynthesis; dimethylallyl diphosphate biosynthesis; dimethylallyl diphosphate from isopentenyl diphosphate: step 1/1. Functionally, catalyzes the 1,3-allylic rearrangement of the homoallylic substrate isopentenyl (IPP) to its highly electrophilic allylic isomer, dimethylallyl diphosphate (DMAPP). This Halobacterium salinarum (strain ATCC 700922 / JCM 11081 / NRC-1) (Halobacterium halobium) protein is Isopentenyl-diphosphate Delta-isomerase.